Here is a 258-residue protein sequence, read N- to C-terminus: Short-chain dehydrogenase/reductase FrzI (258 aa).

3 residues coordinate NADP(+): isoleucine 21, asparagine 41, and asparagine 94. Residues serine 143 and serine 144 each act as proton donor in the active site. Residues tyrosine 157, lysine 161, valine 191, and threonine 193 each contribute to the NADP(+) site. The active-site Proton acceptor is tyrosine 157. The active-site Lowers pKa of active site Tyr is lysine 161.

The protein belongs to the short-chain dehydrogenases/reductases (SDR) family.

It carries out the reaction (1S,3S,6S,7S,8R)-7-hydroxy-6-[(4-methoxyphenyl)methyl]-3-(methylamino)-5-azatricyclo[6.3.1.0(1,5)]dodecan-9-one + NADPH + H(+) = (1S,3S,6S,7S,8S,9S)-6-[(4-methoxyphenyl)methyl]-3-(methylamino)-5-azatricyclo[6.3.1.0(1,5)]dodecane-7,9-diol + NADP(+). It functions in the pathway secondary metabolite biosynthesis. Its function is as follows. Short-chain dehydrogenase/reductase; part of the gene cluster that mediates the biosynthesis of the alkaloid (-)-FR901483, a potent immunosuppressant that shows efficacy in animal models and a probable inhibitor of purine nucleotide biosynthesis by targeting phosphoribosylpyrophosphate amidotransferase (PPAT). Within the pathway, FrzI catalyzes the formation of dephospho-(-)-FR901483 from the aza-tricyclic intermediate produced by FrzH. The biosynthesis of (-)-FR901483 starts with the condensation of two L-tyrosines to yield (S,S)-dityrosyl-piperazine. This process occurs in 3 steps with the non-canonical nonribosomal peptide synthetase FrzA catalyzing the reduction of L-tyrosine into L-tyrosinal, the spontaneous condensation of 2 L-tyrosinal units, and the subsequent reduction by the NmrA-like family domain-containing oxidoreductase FrzB. The cytochrome P450 monooxygenase FrzC then performs coupling between N10 and C1' to morph the piperazine into a 1,4-diazabicyclo[3.2.1]octane spiro-fused to a 2,5-cyclohexadienone. The dienone portion is further reduced to cyclohexanone by the flavin-dependent reductase FrzD. The methyltranserases (MTs) FrzE and FrzF are then involved in the methylation at the C10' amine and the C4 phenolic oxygen, respectively. The order of the two MTs appear to be interchangeable. Cleavage of the C9-N10' bond by the dioxygenase FrzG then leads to formation of a conjugated iminium. In addition to the oxidation of C9, an additional dehydrogenation between C7 and C8 can occur to give a likely shunt product. The next biosynthetic step is the intramolecular aldol condensation catalyzed by the newly identified aldolase FrzH to yield an aza-tricyclic product with the formation of a C9-C3' bond. The short-chain dehydrogenase/reductase FrzI then produces dephospho-(-)-FR901483 that is phosphorylated at C4'-OH into (-)-FR901483 by the phosphotransferase FrzJ. This is Short-chain dehydrogenase/reductase FrzI from Cladobotryum sp.